Consider the following 303-residue polypeptide: Nucleotide-binding protein SAB0719 (303 aa).

18–25 is a binding site for ATP; sequence GLSGAGKS. A GTP-binding site is contributed by 69–72; the sequence is DLRG.

It belongs to the RapZ-like family.

Functionally, displays ATPase and GTPase activities. This chain is Nucleotide-binding protein SAB0719, found in Staphylococcus aureus (strain bovine RF122 / ET3-1).